The primary structure comprises 386 residues: Cytotoxic granule associated RNA binding protein TIA1 (386 aa).

M1 is subject to N-acetylmethionine. RRM domains follow at residues 7–83, 106–184, and 214–286; these read KTLY…WATT, FHVF…WATR, and CTVY…WGKE. The disordered stretch occupies residues 354 to 386; sequence MGPNYGVQPPQGQNGSMLPNQPSGYRVAGYETQ. Residues 363–376 show a composition bias toward polar residues; it reads PQGQNGSMLPNQPS.

In terms of assembly, homooligomer; homooligomerization is induced by Zn(2+). Interacts with FASTK; the interactions leads to its phosphorylation. Interacts (via RRM1 and the C-terminal glutamine-rich (Q) sequence) with SNRPC/U1-C (via N-terminus); thereby facilitating spliceosomal U1 snRNP recruitment to 5' splice sites. In terms of processing, phosphorylated by FASTK; phosphorylation occurs after FAS ligation in FAS-mediated apoptosis and before DNA fragmentation. In terms of tissue distribution, expressed in heart, small intestine, kidney, liver, lung, skeletal muscle, testes, pancreas, and ovary (at protein level).

It is found in the nucleus. The protein localises to the cytoplasm. Its subcellular location is the stress granule. RNA-binding protein involved in the regulation of alternative pre-RNA splicing and mRNA translation by binding to uridine-rich (U-rich) RNA sequences. Binds to U-rich sequences immediately downstream from a 5' splice sites in a uridine-rich small nuclear ribonucleoprotein (U snRNP)-dependent fashion, thereby modulating alternative pre-RNA splicing. Preferably binds to the U-rich IAS1 sequence in a U1 snRNP-dependent manner; this binding is optimal if a 5' splice site is adjacent to IAS1. Activates the use of heterologous 5' splice sites; the activation depends on the intron sequence downstream from the 5' splice site, with a preference for a downstream U-rich sequence. By interacting with SNRPC/U1-C, promotes recruitment and binding of spliceosomal U1 snRNP to 5' splice sites followed by U-rich sequences, thereby facilitating atypical 5' splice site recognition by U1 snRNP. Activates splicing of alternative exons with weak 5' splice sites followed by a U-rich stretch on its own pre-mRNA and on TIAR mRNA. Acts as a modulator of alternative splicing for the apoptotic FAS receptor, thereby promoting apoptosis. Binds to the 5' splice site region of FAS intron 5 to promote accumulation of transcripts that include exon 6 at the expense of transcripts in which exon 6 is skipped, thereby leading to the transcription of a membrane-bound apoptotic FAS receptor, which promotes apoptosis. Binds to a conserved AU-rich cis element in COL2A1 intron 2 and modulates alternative splicing of COL2A1 exon 2. Also binds to the equivalent AT-rich element in COL2A1 genomic DNA, and may thereby be involved in the regulation of transcription. Binds specifically to a polypyrimidine-rich controlling element (PCE) located between the weak 5' splice site and the intronic splicing silencer of CFTR mRNA to promote exon 9 inclusion, thereby antagonizing PTB1 and its role in exon skipping of CFTR exon 9. Involved in the repression of mRNA translation by binding to AU-rich elements (AREs) located in mRNA 3' untranslated regions (3' UTRs), including target ARE-bearing mRNAs encoding TNF and PTGS2. Also participates in the cellular response to environmental stress, by acting downstream of the stress-induced phosphorylation of EIF2S1/EIF2A to promote the recruitment of untranslated mRNAs to cytoplasmic stress granules (SGs), leading to stress-induced translational arrest. Formation and recruitment to SGs is regulated by Zn(2+). Possesses nucleolytic activity against cytotoxic lymphocyte target cells. Functionally, displays enhanced splicing regulatory activity compared with TIA isoform Long. This chain is Cytotoxic granule associated RNA binding protein TIA1 (TIA1), found in Homo sapiens (Human).